We begin with the raw amino-acid sequence, 895 residues long: Receptor-like protein kinase FERONIA (895 aa).

The first 27 residues, 1 to 27 (MKITEGRFRLSLLLLLLLISAATLISA), serve as a signal peptide directing secretion. At 28-447 (ADYSPTEKIL…TTRKSKSNTA (420 aa)) the chain is on the extracellular side. Residues asparagine 46, asparagine 124, asparagine 142, asparagine 171, asparagine 219, asparagine 269, asparagine 305, asparagine 330, asparagine 345, and asparagine 410 are each glycosylated (N-linked (GlcNAc...) asparagine). A helical membrane pass occupies residues 448–468 (IIAGAASGAVVLALIIGFCVF). Residues 469 to 895 (GAYRRRKRGD…FSQIMNPKGR (427 aa)) lie on the Cytoplasmic side of the membrane. The 275-residue stretch at 536–810 (FDESRVLGVG…GDVLWNLEFA (275 aa)) folds into the Protein kinase domain. ATP-binding positions include 542-550 (LGVGGFGKV) and lysine 565. Aspartate 661 (proton acceptor) is an active-site residue. Residues 844-895 (NDKSSDVYEGNVTDSRSSGIDMSIGGRSLASEDSDGLTPSAVFSQIMNPKGR) form a disordered region. A phosphoserine mark is found at serine 858, serine 866, serine 871, and serine 874. The segment covering 884 to 895 (AVFSQIMNPKGR) has biased composition (polar residues).

The protein belongs to the protein kinase superfamily. Ser/Thr protein kinase family. As to quaternary structure, interacts with ROPGEF1. Interacts with RALF1; triggering phosphorylation status and subsequent activation. Interacts with LRE and LLG1. Interacts, via its extracellular domain, with FERONIA at the synergid cell surface. Post-translationally, autophosphorylated. Phosphorylated at Ser-858, Ser-871 and Ser-874 upon activation by RALF1. Expressed in leaves, buds, flowers, siliques, young ovules primordia, and young anthers with immature pollen, but not detected in mature pollen. Highest expression in the synergid cells of the female gametophyte.

It localises to the cell membrane. The catalysed reaction is L-seryl-[protein] + ATP = O-phospho-L-seryl-[protein] + ADP + H(+). The enzyme catalyses L-threonyl-[protein] + ATP = O-phospho-L-threonyl-[protein] + ADP + H(+). Receptor-like protein kinase that mediates the female control of male gamete delivery during fertilization, including growth cessation of compatible pollen tubes ensuring a reproductive isolation barriers, by regulating MLO7 subcellular polarization upon pollen tube perception in the female gametophyte synergids. Required for cell elongation during vegetative growth, mostly in a brassinosteroids- (BR-) independent manner. Acts as an upstream regulator for the Rac/Rop-signaling pathway that controls ROS-mediated root hair development. Seems to regulate a cross-talk between brassinosteroids and ethylene signaling pathways during hypocotyl elongation. Negative regulator of brassinosteroid response in light-grown hypocotyls, but required for brassinosteroid response in etiolated seedlings. Mediates sensitivity to powdery mildew (e.g. Golovinomyces orontii). Positive regulator of auxin-promoted growth that represses the abscisic acid (ABA) signaling via the activation of ABI2 phosphatase. Required for RALF1-mediated extracellular alkalinization in a signaling pathway preventing cell expansion. The chain is Receptor-like protein kinase FERONIA from Arabidopsis thaliana (Mouse-ear cress).